Consider the following 337-residue polypeptide: tRNA N6-adenosine threonylcarbamoyltransferase (337 aa).

Fe cation is bound by residues His111 and His115. Residues 134–138 (LVSGG), Asp167, Gly180, and Asn272 each bind substrate. Asp300 provides a ligand contact to Fe cation.

This sequence belongs to the KAE1 / TsaD family. Fe(2+) is required as a cofactor.

The protein localises to the cytoplasm. The catalysed reaction is L-threonylcarbamoyladenylate + adenosine(37) in tRNA = N(6)-L-threonylcarbamoyladenosine(37) in tRNA + AMP + H(+). Functionally, required for the formation of a threonylcarbamoyl group on adenosine at position 37 (t(6)A37) in tRNAs that read codons beginning with adenine. Is involved in the transfer of the threonylcarbamoyl moiety of threonylcarbamoyl-AMP (TC-AMP) to the N6 group of A37, together with TsaE and TsaB. TsaD likely plays a direct catalytic role in this reaction. The chain is tRNA N6-adenosine threonylcarbamoyltransferase from Escherichia coli (strain K12 / MC4100 / BW2952).